Consider the following 553-residue polypeptide: Methionine--tRNA ligase (553 aa).

Residues 12–22 (PYANSQLHLGH) carry the 'HIGH' region motif. Residues Cys-144, Cys-147, Cys-157, and Cys-160 each coordinate Zn(2+). Positions 332-336 (KFSKS) match the 'KMSKS' region motif. ATP is bound at residue Lys-335.

The protein belongs to the class-I aminoacyl-tRNA synthetase family. MetG type 1 subfamily. Monomer. Requires Zn(2+) as cofactor.

The protein resides in the cytoplasm. The enzyme catalyses tRNA(Met) + L-methionine + ATP = L-methionyl-tRNA(Met) + AMP + diphosphate. In terms of biological role, is required not only for elongation of protein synthesis but also for the initiation of all mRNA translation through initiator tRNA(fMet) aminoacylation. This is Methionine--tRNA ligase from Dehalococcoides mccartyi (strain ATCC BAA-2100 / JCM 16839 / KCTC 5957 / BAV1).